The chain runs to 124 residues: Small ribosomal subunit protein uS12 (124 aa).

The interval 1–23 is disordered; sequence MATINQLVRKPRKRPVAKSDVPA. D89 carries the post-translational modification 3-methylthioaspartic acid. The tract at residues 101–124 is disordered; the sequence is ALDTSGVQNRRQGRSKYGTKRPKS. Over residues 111–124 the composition is skewed to basic residues; the sequence is RQGRSKYGTKRPKS.

The protein belongs to the universal ribosomal protein uS12 family. In terms of assembly, part of the 30S ribosomal subunit. Contacts proteins S8 and S17. May interact with IF1 in the 30S initiation complex.

Functionally, with S4 and S5 plays an important role in translational accuracy. Interacts with and stabilizes bases of the 16S rRNA that are involved in tRNA selection in the A site and with the mRNA backbone. Located at the interface of the 30S and 50S subunits, it traverses the body of the 30S subunit contacting proteins on the other side and probably holding the rRNA structure together. The combined cluster of proteins S8, S12 and S17 appears to hold together the shoulder and platform of the 30S subunit. The protein is Small ribosomal subunit protein uS12 of Chromohalobacter salexigens (strain ATCC BAA-138 / DSM 3043 / CIP 106854 / NCIMB 13768 / 1H11).